Consider the following 267-residue polypeptide: Regulatory protein RecX (267 aa).

It belongs to the RecX family.

It is found in the cytoplasm. Modulates RecA activity. The polypeptide is Regulatory protein RecX (Staphylococcus epidermidis (strain ATCC 12228 / FDA PCI 1200)).